A 129-amino-acid polypeptide reads, in one-letter code: Cytochrome c oxidase subunit 5B, mitochondrial (129 aa).

The N-terminal 31 residues, 1-31, are a transit peptide targeting the mitochondrion; it reads MASRLLRGAGALAAQTLRARGPNGVAVVRSM. K68 and K86 each carry N6-acetyllysine. Residues C91, C93, C113, and C116 each coordinate Zn(2+). K121 is modified (N6-acetyllysine).

The protein belongs to the cytochrome c oxidase subunit 5B family. As to quaternary structure, component of the cytochrome c oxidase (complex IV, CIV), a multisubunit enzyme composed of 14 subunits. The complex is composed of a catalytic core of 3 subunits MT-CO1, MT-CO2 and MT-CO3, encoded in the mitochondrial DNA, and 11 supernumerary subunits COX4I, COX5A, COX5B, COX6A, COX6B, COX6C, COX7A, COX7B, COX7C, COX8 and NDUFA4, which are encoded in the nuclear genome. The complex exists as a monomer or a dimer and forms supercomplexes (SCs) in the inner mitochondrial membrane with NADH-ubiquinone oxidoreductase (complex I, CI) and ubiquinol-cytochrome c oxidoreductase (cytochrome b-c1 complex, complex III, CIII), resulting in different assemblies (supercomplex SCI(1)III(2)IV(1) and megacomplex MCI(2)III(2)IV(2)).

Its subcellular location is the mitochondrion inner membrane. It functions in the pathway energy metabolism; oxidative phosphorylation. In terms of biological role, component of the cytochrome c oxidase, the last enzyme in the mitochondrial electron transport chain which drives oxidative phosphorylation. The respiratory chain contains 3 multisubunit complexes succinate dehydrogenase (complex II, CII), ubiquinol-cytochrome c oxidoreductase (cytochrome b-c1 complex, complex III, CIII) and cytochrome c oxidase (complex IV, CIV), that cooperate to transfer electrons derived from NADH and succinate to molecular oxygen, creating an electrochemical gradient over the inner membrane that drives transmembrane transport and the ATP synthase. Cytochrome c oxidase is the component of the respiratory chain that catalyzes the reduction of oxygen to water. Electrons originating from reduced cytochrome c in the intermembrane space (IMS) are transferred via the dinuclear copper A center (CU(A)) of subunit 2 and heme A of subunit 1 to the active site in subunit 1, a binuclear center (BNC) formed by heme A3 and copper B (CU(B)). The BNC reduces molecular oxygen to 2 water molecules using 4 electrons from cytochrome c in the IMS and 4 protons from the mitochondrial matrix. This Sus scrofa (Pig) protein is Cytochrome c oxidase subunit 5B, mitochondrial (COX5B).